A 190-amino-acid polypeptide reads, in one-letter code: Holliday junction branch migration complex subunit RuvA (190 aa).

Residues 1-64 (MIGRITGTLI…EDAHLLYGFG (64 aa)) are domain I. The interval 65-137 (TASERAAFRE…MRGKLGADIG (73 aa)) is domain II. The flexible linker stretch occupies residues 137–141 (GATPH). The domain III stretch occupies residues 142 to 190 (AVPDSQSDILNALLALGYSEKESLAALKTLPEGLGVSDGIRQALKALAR).

The protein belongs to the RuvA family. As to quaternary structure, homotetramer. Forms an RuvA(8)-RuvB(12)-Holliday junction (HJ) complex. HJ DNA is sandwiched between 2 RuvA tetramers; dsDNA enters through RuvA and exits via RuvB. An RuvB hexamer assembles on each DNA strand where it exits the tetramer. Each RuvB hexamer is contacted by two RuvA subunits (via domain III) on 2 adjacent RuvB subunits; this complex drives branch migration. In the full resolvosome a probable DNA-RuvA(4)-RuvB(12)-RuvC(2) complex forms which resolves the HJ.

It localises to the cytoplasm. Its function is as follows. The RuvA-RuvB-RuvC complex processes Holliday junction (HJ) DNA during genetic recombination and DNA repair, while the RuvA-RuvB complex plays an important role in the rescue of blocked DNA replication forks via replication fork reversal (RFR). RuvA specifically binds to HJ cruciform DNA, conferring on it an open structure. The RuvB hexamer acts as an ATP-dependent pump, pulling dsDNA into and through the RuvAB complex. HJ branch migration allows RuvC to scan DNA until it finds its consensus sequence, where it cleaves and resolves the cruciform DNA. In Bordetella avium (strain 197N), this protein is Holliday junction branch migration complex subunit RuvA.